Here is a 341-residue protein sequence, read N- to C-terminus: Elongation factor Ts (341 aa).

Residues 80–83 are involved in Mg(2+) ion dislocation from EF-Tu; that stretch reads TDFV.

This sequence belongs to the EF-Ts family.

Its subcellular location is the cytoplasm. In terms of biological role, associates with the EF-Tu.GDP complex and induces the exchange of GDP to GTP. It remains bound to the aminoacyl-tRNA.EF-Tu.GTP complex up to the GTP hydrolysis stage on the ribosome. This chain is Elongation factor Ts, found in Lactobacillus helveticus (strain DPC 4571).